A 558-amino-acid polypeptide reads, in one-letter code: Poly(A) polymerase PAPalpha (558 aa).

The span at 1–17 shows a compositional bias: polar residues; it reads MNTKTYGVTEPISTNGP. The segment at 1-20 is disordered; sequence MNTKTYGVTEPISTNGPTPK. Residues 86-88, 99-101, Asp153, Lys214, Tyr223, and 232-233 each bind ATP; these read FGS, DID, and GV. Mg(2+) is bound by residues Asp99, Asp101, and Asp153. The segment at 516-558 is disordered; sequence VYEDGEERPKKSGKKRKKVIKEDGQKRVRNESPASSASVNGSS. Residues 535–545 are compositionally biased toward basic and acidic residues; that stretch reads IKEDGQKRVRN. The span at 547 to 558 shows a compositional bias: low complexity; it reads SPASSASVNGSS.

The protein belongs to the poly(A) polymerase family. Mg(2+) is required as a cofactor. The cofactor is Mn(2+).

The protein resides in the nucleus. The enzyme catalyses RNA(n) + ATP = RNA(n)-3'-adenine ribonucleotide + diphosphate. Polymerase that creates the 3'-poly(A) tail of mRNA's. May acquire specificity through interaction with a cleavage and polyadenylation factor. This is Poly(A) polymerase PAPalpha (PAPALPHA) from Candida albicans (strain SC5314 / ATCC MYA-2876) (Yeast).